Reading from the N-terminus, the 396-residue chain is DNA dC-&gt;dU-editing enzyme APOBEC3 (396 aa).

CMP/dCMP-type deaminase domains are found at residues 38-154 (GRKD…AQVA) and 205-324 (EEEF…LCSL). His-71 is a binding site for Zn(2+). Glu-73 acts as the Proton donor in catalysis. Residues Cys-105, Cys-108, His-255, Cys-283, and Cys-286 each contribute to the Zn(2+) site.

Belongs to the cytidine and deoxycytidylate deaminase family. As to quaternary structure, homodimer. Requires Zn(2+) as cofactor.

The protein resides in the cytoplasm. It catalyses the reaction a 2'-deoxycytidine in single-stranded DNA + H2O + H(+) = a 2'-deoxyuridine in single-stranded DNA + NH4(+). DNA deaminase (cytidine deaminase) which acts as an inhibitor of retrovirus replication and retrotransposon mobility via deaminase-dependent and -independent mechanisms. Selectively targets single-stranded DNA and does not deaminate double-stranded DNA or single- or double-stranded RNA. The protein is DNA dC-&gt;dU-editing enzyme APOBEC3 (APOBEC3) of Cricetulus longicaudatus (Long-tailed dwarf hamster).